The sequence spans 41 residues: Photosystem II reaction center protein Y (41 aa).

The chain crosses the membrane as a helical span at residues 5–23; it reads VLIVLAPVIIAGSWALFNI.

The protein belongs to the PsbY family. In terms of assembly, PSII is composed of 1 copy each of membrane proteins PsbA, PsbB, PsbC, PsbD, PsbE, PsbF, PsbH, PsbI, PsbJ, PsbK, PsbL, PsbM, PsbT, PsbX, PsbY, PsbZ, Psb30/Ycf12, peripheral proteins PsbO, CyanoQ (PsbQ), PsbU, PsbV and a large number of cofactors. It forms dimeric complexes.

It is found in the cellular thylakoid membrane. Functionally, loosely associated component of the core of photosystem II (PSII), it is not always seen in crystals. PSII is a light-driven water plastoquinone oxidoreductase, using light energy to abstract electrons from H(2)O, generating a proton gradient subsequently used for ATP formation. The sequence is that of Photosystem II reaction center protein Y from Gloeothece citriformis (strain PCC 7424) (Cyanothece sp. (strain PCC 7424)).